The primary structure comprises 338 residues: Large ribosomal subunit protein uL3 (338 aa).

The tract at residues 230 to 253 (HRKGHRRTGTIGPQAPALMFTQPR) is disordered.

Belongs to the universal ribosomal protein uL3 family. Part of the 50S ribosomal subunit. Forms a cluster with proteins L14 and L24e.

Its function is as follows. One of the primary rRNA binding proteins, it binds directly near the 3'-end of the 23S rRNA, where it nucleates assembly of the 50S subunit. This is Large ribosomal subunit protein uL3 from Pyrobaculum neutrophilum (strain DSM 2338 / JCM 9278 / NBRC 100436 / V24Sta) (Thermoproteus neutrophilus).